Reading from the N-terminus, the 360-residue chain is Ribosomal RNA large subunit methyltransferase M (360 aa).

Residues S187, 220–223, D239, D259, and D276 contribute to the S-adenosyl-L-methionine site; that span reads CPGG. K305 serves as the catalytic Proton acceptor.

It belongs to the class I-like SAM-binding methyltransferase superfamily. RNA methyltransferase RlmE family. RlmM subfamily. Monomer.

Its subcellular location is the cytoplasm. The enzyme catalyses cytidine(2498) in 23S rRNA + S-adenosyl-L-methionine = 2'-O-methylcytidine(2498) in 23S rRNA + S-adenosyl-L-homocysteine + H(+). Its function is as follows. Catalyzes the 2'-O-methylation at nucleotide C2498 in 23S rRNA. The sequence is that of Ribosomal RNA large subunit methyltransferase M from Photobacterium profundum (strain SS9).